The following is a 2560-amino-acid chain: Plipastatin synthase subunit B (2560 aa).

The segment at Ile7 to Ala310 is condensation 1. Residues Ile7–His1042 are domain 1 (tyrosine-activating). The segment at Thr496–Val889 is adenylation 1. The Carrier 1 domain occupies Ala965–Lys1040. Position 1000 is an O-(pantetheine 4'-phosphoryl)serine (Ser1000). A condensation 2 region spans residues Gln1052–Glu1342. The interval Gln1052–Ile2553 is domain 2 (D-allo-threonine-activating). Positions Thr1527–Val1927 are adenylation 2. In terms of domain architecture, Carrier 2 spans Ser2006–Val2080. O-(pantetheine 4'-phosphoryl)serine is present on Ser2041. The interval Val2088 to Ile2553 is epimerization.

It belongs to the ATP-dependent AMP-binding enzyme family. The cofactor is pantetheine 4'-phosphate.

In terms of biological role, this protein is a multifunctional enzyme, able to activate and polymerize the amino acids Tyr and Thr as part of the biosynthesis of the lipopeptide antibiotic plipastatin. The Thr residue is further converted to the D-allo-isomer form. The activation sites for these amino acids consist of individual domains. The protein is Plipastatin synthase subunit B (ppsB) of Bacillus subtilis (strain 168).